The following is a 219-amino-acid chain: Ropporin-1-like protein (219 aa).

In terms of domain architecture, RIIa spans 17-54; that stretch reads PELPDILKQFTKAAIRTQPHDLLQWSAAYFDSLSKGEP.

The protein belongs to the ropporin family. Component of axonemal radial spoke complexes.

The protein resides in the cell projection. It localises to the cilium. It is found in the flagellum. Functionally, functions as part of axonemal radial spoke complexes that play an important part in the motility of sperm and cilia. Important for male fertility. Involved in fibrous sheath integrity and sperm motility, plays a role in PKA-dependent signaling processes required for spermatozoa capacitation. In Xenopus laevis (African clawed frog), this protein is Ropporin-1-like protein (ropn1l).